We begin with the raw amino-acid sequence, 94 residues long: Bacterial microcompartment shell protein PduA (94 aa).

In terms of domain architecture, BMC spans A5–P89.

Belongs to the bacterial microcompartments protein family. As to quaternary structure, homohexamer with a central pore of about 5.6 Angstroms in diameter. The hexamers pack against each other in arrays. Interacts with the N-terminus of PduP which targets PduP to the BMC. Modeling suggests PduC, PduD, PduE, PduL and PduP interact with a cleft formed by the C-terminal segments of 2 adjacent PduA subunits (on the BMC luminal side) in the hexamer.

Its subcellular location is the bacterial microcompartment. Its pathway is polyol metabolism; 1,2-propanediol degradation. Functionally, one of the major shell proteins of the bacterial microcompartment (BMC) dedicated to 1,2-propanediol (1,2-PD) degradation. At least one of PduA or PduJ is required for BMC assembly; it must be encoded as the first gene in the pdu operon. Not required for structural integrity of BMCs, it is required to mitigate propionaldehyde toxicity. Controls diffusion of 1,2-PD into and propionaldehyde out of the BMC shell; residue 40 is particularly important for pore permeability. Overexpression of this protein leads to aberrant filaments that extend the length of the cell, cross the cleavage furrow and impair division. The filaments form nanotubes with a hollow center. The isolated BMC shell component protein ratio for J:A:B':B:K:T:U is approximately 15:10:7:6:1:1:2. Edge residues (particularly Lys-26) are important for function and assembly of the BMC, and influence array formation by hexamers. Interaction with PduA allows encapsulation of at least PduP in BMCs. Probably also targets PduD to the BMC. PduA is probably the hub for binding multiple enzymes to the interior of the BMC; modeling suggests PduC, PduD, PduE, PduG, PduL and PduP are targeted to PduA. In terms of biological role, the 1,2-PD-specific bacterial microcompartment (BMC) concentrates low levels of 1,2-PD catabolic enzymes, concentrates volatile reaction intermediates thus enhancing pathway flux and keeps the level of toxic, mutagenic propionaldehyde low. The polypeptide is Bacterial microcompartment shell protein PduA (Salmonella typhimurium (strain LT2 / SGSC1412 / ATCC 700720)).